The sequence spans 334 residues: Ribosomal RNA large subunit methyltransferase F (334 aa).

The tract at residues 1 to 25 is disordered; the sequence is MPRPSSPRPDAERKSASPLHPRNRH.

It belongs to the methyltransferase superfamily. METTL16/RlmF family.

It is found in the cytoplasm. The enzyme catalyses adenosine(1618) in 23S rRNA + S-adenosyl-L-methionine = N(6)-methyladenosine(1618) in 23S rRNA + S-adenosyl-L-homocysteine + H(+). Specifically methylates the adenine in position 1618 of 23S rRNA. In Pseudomonas paraeruginosa (strain DSM 24068 / PA7) (Pseudomonas aeruginosa (strain PA7)), this protein is Ribosomal RNA large subunit methyltransferase F.